A 559-amino-acid polypeptide reads, in one-letter code: Asparagine--tRNA ligase, cytoplasmic (559 aa).

Ser-72 bears the Phosphoserine mark. Lys-255 and Lys-501 each carry N6-acetyllysine.

It belongs to the class-II aminoacyl-tRNA synthetase family.

The protein localises to the cytoplasm. It carries out the reaction tRNA(Asn) + L-asparagine + ATP = L-asparaginyl-tRNA(Asn) + AMP + diphosphate + H(+). The protein is Asparagine--tRNA ligase, cytoplasmic (NARS) of Bos taurus (Bovine).